Here is a 134-residue protein sequence, read N- to C-terminus: Large ribosomal subunit protein eL32 (134 aa).

Belongs to the eukaryotic ribosomal protein eL32 family.

The sequence is that of Large ribosomal subunit protein eL32 (RpL32) from Drosophila melanogaster (Fruit fly).